A 378-amino-acid polypeptide reads, in one-letter code: Lipid-A-disaccharide synthase (378 aa).

It belongs to the LpxB family.

The enzyme catalyses a lipid X + a UDP-2-N,3-O-bis[(3R)-3-hydroxyacyl]-alpha-D-glucosamine = a lipid A disaccharide + UDP + H(+). It participates in bacterial outer membrane biogenesis; LPS lipid A biosynthesis. Its function is as follows. Condensation of UDP-2,3-diacylglucosamine and 2,3-diacylglucosamine-1-phosphate to form lipid A disaccharide, a precursor of lipid A, a phosphorylated glycolipid that anchors the lipopolysaccharide to the outer membrane of the cell. In Pseudomonas paraeruginosa (strain DSM 24068 / PA7) (Pseudomonas aeruginosa (strain PA7)), this protein is Lipid-A-disaccharide synthase.